The following is a 239-amino-acid chain: 1-(5-phosphoribosyl)-5-[(5-phosphoribosylamino)methylideneamino] imidazole-4-carboxamide isomerase (239 aa).

Asp-8 acts as the Proton acceptor in catalysis. The active-site Proton donor is the Asp-129.

This sequence belongs to the HisA/HisF family.

It localises to the cytoplasm. The catalysed reaction is 1-(5-phospho-beta-D-ribosyl)-5-[(5-phospho-beta-D-ribosylamino)methylideneamino]imidazole-4-carboxamide = 5-[(5-phospho-1-deoxy-D-ribulos-1-ylimino)methylamino]-1-(5-phospho-beta-D-ribosyl)imidazole-4-carboxamide. It functions in the pathway amino-acid biosynthesis; L-histidine biosynthesis; L-histidine from 5-phospho-alpha-D-ribose 1-diphosphate: step 4/9. This is 1-(5-phosphoribosyl)-5-[(5-phosphoribosylamino)methylideneamino] imidazole-4-carboxamide isomerase from Bacillus cereus (strain G9842).